The following is a 128-amino-acid chain: uncharacterized protein (128 aa).

The VOC domain occupies 5 to 128; that stretch reads SIHHIAIICS…DQLPLELYEQ (124 aa). Positions 8, 56, 77, and 124 each coordinate a divalent metal cation.

This is an uncharacterized protein from Bacillus subtilis (strain 168).